Reading from the N-terminus, the 987-residue chain is Probable outer membrane protein PmpG (987 aa).

The first 25 residues, 1-25 (MMQTPFHKFFLLAMLSYSLLQGGHA), serve as a signal peptide directing secretion. Residues 707–987 (GRAYCRGIWI…GLSIGSKIRF (281 aa)) form the Autotransporter domain.

Belongs to the PMP outer membrane protein family.

It is found in the secreted. The protein localises to the cell wall. The protein resides in the cell outer membrane. This Chlamydia muridarum (strain MoPn / Nigg) protein is Probable outer membrane protein PmpG (pmpG).